We begin with the raw amino-acid sequence, 240 residues long: Uridylate kinase (240 aa).

ATP is bound at residue 12-15 (KISG). An involved in allosteric activation by GTP region spans residues 20–25 (GNQGFG). UMP is bound at residue G54. 2 residues coordinate ATP: G55 and R59. UMP-binding positions include D74 and 135–142 (TGNPYFST). ATP-binding residues include Y168 and D171.

It belongs to the UMP kinase family. Homohexamer.

The protein localises to the cytoplasm. It catalyses the reaction UMP + ATP = UDP + ADP. It functions in the pathway pyrimidine metabolism; CTP biosynthesis via de novo pathway; UDP from UMP (UMPK route): step 1/1. Its activity is regulated as follows. Allosterically activated by GTP. Inhibited by UTP. Functionally, catalyzes the reversible phosphorylation of UMP to UDP. This is Uridylate kinase from Moorella thermoacetica (strain ATCC 39073 / JCM 9320).